The chain runs to 84 residues: Small ribosomal subunit protein uS17 (84 aa).

It belongs to the universal ribosomal protein uS17 family. In terms of assembly, part of the 30S ribosomal subunit.

Functionally, one of the primary rRNA binding proteins, it binds specifically to the 5'-end of 16S ribosomal RNA. The chain is Small ribosomal subunit protein uS17 from Glaesserella parasuis serovar 5 (strain SH0165) (Haemophilus parasuis).